Reading from the N-terminus, the 127-residue chain is Fluoride-specific ion channel FluC (127 aa).

Helical transmembrane passes span 7 to 27 (LLVALGGALGSLLRYGLGAWV), 31 to 51 (LGAGFPWSTLFVNALGSFLIG), 68 to 88 (LFLAVGVLGGFTTFSSLSYET), and 97 to 117 (VGKALLYAFGSLFLGLLLAFL). Gly-76 and Thr-79 together coordinate Na(+).

Belongs to the fluoride channel Fluc/FEX (TC 1.A.43) family.

Its subcellular location is the cell inner membrane. The enzyme catalyses fluoride(in) = fluoride(out). Na(+) is not transported, but it plays an essential structural role and its presence is essential for fluoride channel function. Fluoride-specific ion channel. Important for reducing fluoride concentration in the cell, thus reducing its toxicity. This Thermus thermophilus (strain ATCC BAA-163 / DSM 7039 / HB27) protein is Fluoride-specific ion channel FluC.